A 364-amino-acid chain; its full sequence is FK506-binding protein 4 (364 aa).

Disordered regions lie at residues 92 to 148 and 168 to 239; these read SMFG…DDEI and EADK…PTKP. The span at 94 to 148 shows a compositional bias: acidic residues; that stretch reads FGDDEHGEDEDNEEEEGEEGEDEEMEGEDEDEDEEDEDEEDEDEEEEDDEEDDEI. Residues 168–184 are compositionally biased toward basic and acidic residues; the sequence is EADKNKQQKKPKQEEPV. Residues 185 to 239 are compositionally biased toward low complexity; the sequence is KQVTPVKPTAQAAKPTAATTTTTTTTTTTPTKQTTPAKPAAKPVTPTKPVTPTKP. One can recognise a PPIase FKBP-type domain in the interval 277 to 363; sequence GKKVGVKYIG…IFDVELVSCA (87 aa).

It belongs to the FKBP-type PPIase family. As to quaternary structure, binds to histones H3 and H4.

It is found in the nucleus. It carries out the reaction [protein]-peptidylproline (omega=180) = [protein]-peptidylproline (omega=0). With respect to regulation, inhibited by both FK506 and rapamycin. Its function is as follows. PPIase that acts as a histone chaperone. Histone proline isomerase that increases the rate of cis-trans isomerization at prolines on the histone H3 N-terminal tail. Proline isomerization influences H3 methylation thereby regulating gene expression. The polypeptide is FK506-binding protein 4 (fkbp4) (Dictyostelium discoideum (Social amoeba)).